Consider the following 816-residue polypeptide: Coiled-coil and C2 domain-containing protein 1-like (816 aa).

Over residues 1–11 the composition is skewed to basic and acidic residues; that stretch reads MFSRKKPEPAK. 3 disordered regions span residues 1-135, 157-176, and 186-269; these read MFSR…TFLP, ANAK…RGLK, and AAGK…RQTD. Acidic residues predominate over residues 25–47; it reads IPDDFDPSAGYGEDDGGDSDLEA. The span at 73–85 shows a compositional bias: basic and acidic residues; that stretch reads DLDKMIADSLRDV. Positions 86 to 100 are enriched in acidic residues; it reads SDDDDDDNLESDPDL. The span at 122–131 shows a compositional bias: low complexity; that stretch reads PPAASEEPVQ. The segment at 145 to 200 is DM14 1; sequence IKQRLEMYKQAEANAKTAGDSGKARRFGRGLKTLKDLHRQAAAGKSINVDDIPPEV. The segment covering 220–243 has biased composition (pro residues); that stretch reads PSTPASPPPVPSRAAPDPPTPGTP. DM14 stretches follow at residues 265 to 317 and 365 to 419; these read SRQT…MPPP and LQQR…LPVP. A coiled-coil region spans residues 355 to 382; the sequence is LAAATNMLEALQQRLEKYQSVEAAAKAE. Residues 418-492 form a disordered region; it reads VPPGFGPLPT…TRTSGNQQKN (75 aa). Residues 424 to 433 show a composition bias toward low complexity; that stretch reads PLPTADAAPV. The span at 434 to 449 shows a compositional bias: pro residues; sequence APTPSLPTSPTSPPPT. The segment covering 450-471 has biased composition (low complexity); it reads ASTSAGGTPSSSSATTPTAPRK. Positions 483-492 are enriched in polar residues; the sequence is TRTSGNQQKN. The interval 502–556 is DM14 4; that stretch reads LLERQKEFKLAAIEAKKAGEIDQAKEYLKIFKGFDSLLNAASSGLPVDLSTLPVP. One can recognise a C2 domain in the interval 637–776; the sequence is RKNEPLPKFH…ETKCEIHDTY (140 aa).

It belongs to the CC2D1 family. In terms of assembly, interacts (via DM14 domains 1 and 3) with shrb; the interaction is direct and blocks access to the surface involved in shrb polymerization. This interaction may be required for the ESCRT-III complex role in multivesicular body formation.

Its subcellular location is the cytoplasm. The protein resides in the cytosol. It localises to the apicolateral cell membrane. The protein localises to the cell cortex. It is found in the endosome. Functionally, phosphatidyl inositol monophosphate binding protein involved in endosomal protein sorting through regulation of the endosomal sorting required for transport (ESCRT) pathway. Required for full activity of the ESCRT-III complex core component shrb/shrub, probably by preventing its inappropriate polymerisation. Required, but not essential, for the efficient generation of intraluminal vesicles (ILVs) in multivesicular bodies (MVBs). Involved in a late stage of the endosomal pathway targeting transmembrane proteins of the plasma membrane for lysosomal degradation. Plays a critical role in regulation of multiple signal transduction pathways, including the Notch and BMP/decapentaplegic (dpp) signaling pathways, through targeting of membrane bound receptors to multivesicular bodies, isolating them from the cytoplasm and targeting them for lysosomal degradation. Involved in targeting N/Notch for endosomal degradation, negatively regulating the Notch signaling pathway. Regulates Notch signaling in imaginal disk cells and follicle cells during oogenesis and multiple developmental processes, including development of wings, veins, legs, eyes and bristles. Restricts the activity of Notch to the dorsoventral (D/V) boundary of the wing imaginal disk. In external sensory organ development regulates Notch signaling during asymmetric cell division and differentiation of sensory organ precursor cells. May be involved in regulation of apoptosis and cell growth independent of Notch signaling. Involved in targeting tkv for endosomal degradation, negatively regulating the BMP/decapentaplegic (dpp) signaling pathway. Regulates the BMP/dpp signaling pathway in follicle cells during oogenesis, but not in imaginal disk cells during wing development. May be involved in differentiation or morphogenesis of peripodial epithelial cells in the developing imaginal disk. Involved in abscission of germline cells during oogenesis. In Drosophila melanogaster (Fruit fly), this protein is Coiled-coil and C2 domain-containing protein 1-like.